Here is a 462-residue protein sequence, read N- to C-terminus: Anthranilate synthase component 1 (462 aa).

L-tryptophan-binding positions include Ser37 and 244–246 (PYM). A chorismate-binding site is contributed by 279–280 (GT). Glu306 contacts Mg(2+). Residues Tyr394, Arg414, 428-430 (GAG), and Gly430 contribute to the chorismate site. Glu443 contacts Mg(2+).

This sequence belongs to the anthranilate synthase component I family. Heterotetramer consisting of two non-identical subunits: a beta subunit (TrpG) and a large alpha subunit (TrpE). It depends on Mg(2+) as a cofactor.

The catalysed reaction is chorismate + L-glutamine = anthranilate + pyruvate + L-glutamate + H(+). It participates in amino-acid biosynthesis; L-tryptophan biosynthesis; L-tryptophan from chorismate: step 1/5. Its activity is regulated as follows. Feedback inhibited by tryptophan. In terms of biological role, part of a heterotetrameric complex that catalyzes the two-step biosynthesis of anthranilate, an intermediate in the biosynthesis of L-tryptophan. In the first step, the glutamine-binding beta subunit (TrpG) of anthranilate synthase (AS) provides the glutamine amidotransferase activity which generates ammonia as a substrate that, along with chorismate, is used in the second step, catalyzed by the large alpha subunit of AS (TrpE) to produce anthranilate. In the absence of TrpG, TrpE can synthesize anthranilate directly from chorismate and high concentrations of ammonia. The protein is Anthranilate synthase component 1 (trpE) of Thermus thermophilus (strain ATCC 27634 / DSM 579 / HB8).